The chain runs to 314 residues: tRNA-cytidine(32) 2-sulfurtransferase (314 aa).

The PP-loop motif signature appears at 53 to 58 (SGGKDS). [4Fe-4S] cluster-binding residues include Cys128, Cys131, and Cys219.

The protein belongs to the TtcA family. Homodimer. Requires Mg(2+) as cofactor. It depends on [4Fe-4S] cluster as a cofactor.

It is found in the cytoplasm. It catalyses the reaction cytidine(32) in tRNA + S-sulfanyl-L-cysteinyl-[cysteine desulfurase] + AH2 + ATP = 2-thiocytidine(32) in tRNA + L-cysteinyl-[cysteine desulfurase] + A + AMP + diphosphate + H(+). Its pathway is tRNA modification. Functionally, catalyzes the ATP-dependent 2-thiolation of cytidine in position 32 of tRNA, to form 2-thiocytidine (s(2)C32). The sulfur atoms are provided by the cysteine/cysteine desulfurase (IscS) system. The protein is tRNA-cytidine(32) 2-sulfurtransferase of Colwellia psychrerythraea (strain 34H / ATCC BAA-681) (Vibrio psychroerythus).